The sequence spans 144 residues: Galectin a (144 aa).

The region spanning 1–138 (DHIDLEFDVG…DAVLRKLCVV (138 aa)) is the Galectin domain.

Tetramer.

Its function is as follows. Lectin that binds beta-galactoside and a wide array of complex carbohydrates. The chain is Galectin a from Aplysina lactuca (Marine sponge).